The following is a 276-amino-acid chain: NAC domain-containing protein 67 (276 aa).

The NAC domain maps to 17 to 170; the sequence is LPPGFRFHPT…DWVLCRLYNK (154 aa).

As to expression, expressed in leaf blades.

It localises to the nucleus. Probable transcription factor involved in stress response. The sequence is that of NAC domain-containing protein 67 from Oryza sativa subsp. japonica (Rice).